A 287-amino-acid chain; its full sequence is Nitrogenase iron protein (287 aa).

An ATP-binding site is contributed by 8–15 (GKGGIGKS). C96 serves as a coordination point for [4Fe-4S] cluster. R99 carries the post-translational modification ADP-ribosylarginine; by dinitrogenase reductase ADP-ribosyltransferase. C130 is a [4Fe-4S] cluster binding site.

This sequence belongs to the NifH/BchL/ChlL family. Homodimer. It depends on [4Fe-4S] cluster as a cofactor. Post-translationally, the reversible ADP-ribosylation of Arg-99 inactivates the nitrogenase reductase and regulates nitrogenase activity.

The catalysed reaction is N2 + 8 reduced [2Fe-2S]-[ferredoxin] + 16 ATP + 16 H2O = H2 + 8 oxidized [2Fe-2S]-[ferredoxin] + 2 NH4(+) + 16 ADP + 16 phosphate + 6 H(+). Its function is as follows. The key enzymatic reactions in nitrogen fixation are catalyzed by the nitrogenase complex, which has 2 components: the iron protein and the molybdenum-iron protein. This chain is Nitrogenase iron protein, found in Frankia casuarinae (strain DSM 45818 / CECT 9043 / HFP020203 / CcI3).